Here is a 104-residue protein sequence, read N- to C-terminus: UPF0235 protein Paes_1868 (104 aa).

This sequence belongs to the UPF0235 family.

In Prosthecochloris aestuarii (strain DSM 271 / SK 413), this protein is UPF0235 protein Paes_1868.